The sequence spans 479 residues: U6 small nuclear RNA (adenine-(43)-N(6))-methyltransferase (479 aa).

K82, G108, D131, T164, and N184 together coordinate S-adenosyl-L-methionine. Residues 420-424 (DNASQ) form an involved in dlc-1 binding region.

The protein belongs to the methyltransferase superfamily. METTL16/RlmF family. Self-associates. Interacts with dlc-1; the interaction is direct, and is required for nuclear localization of mett-10. Expressed in the intestine, vulva, and cells of the somatic gonad including distal tip cells, gonadal sheath cells and spermatheca.

The protein localises to the nucleus. It catalyses the reaction an adenosine in mRNA + S-adenosyl-L-methionine = an N(6)-methyladenosine in mRNA + S-adenosyl-L-homocysteine + H(+). It carries out the reaction adenosine in U6 snRNA + S-adenosyl-L-methionine = N(6)-methyladenosine in U6 snRNA + S-adenosyl-L-homocysteine + H(+). Its function is as follows. RNA N6-methyltransferase that methylates adenosine residues at the N(6) position of a subset of RNAs and is involved in S-adenosyl-L-methionine homeostasis by regulating splicing of S-adenosylmethionine synthase transcripts (sams-3, sams-4 and sams-5). Able to N6-methylate a subset of mRNAs containing the 5'UACAGAAAC-3' nonamer sequence. Plays a key role in S-adenosyl-L-methionine homeostasis: under rich-diet conditions, catalyzes N6-methylation of S-adenosylmethionine synthase mRNAs (sams-3, sams-4 and sams-5), directly inhibiting splicing and protein production of S-adenosylmethionine synthase. In addition to mRNAs, also able to mediate N6-methylation of U6 small nuclear RNA (U6 snRNA). Required for gamete production, inhibiting germ cell proliferative fate and ensuring germ cell meiotic development. Also promotes progression of the mitotic cell cycle in those germ cells that continue to proliferate. Plays a role in the development of the vulva, somatic gonad and embryo. This is U6 small nuclear RNA (adenine-(43)-N(6))-methyltransferase from Caenorhabditis elegans.